The following is a 417-amino-acid chain: Serpin A3-7 (417 aa).

The N-terminal stretch at 1–25 (MRTERTSFLLALGLLVSGFCSRVHC) is a signal peptide. Asn-103, Asn-183, Asn-221, and Asn-267 each carry an N-linked (GlcNAc...) asparagine glycan.

The protein belongs to the serpin family. As to quaternary structure, homodimer.

The protein resides in the cytoplasmic vesicle. Its subcellular location is the secretory vesicle. It localises to the chromaffin granule. The protein localises to the secreted. Functionally, serine protease inhibitor. The protein is Serpin A3-7 of Bos taurus (Bovine).